Consider the following 331-residue polypeptide: 4-hydroxythreonine-4-phosphate dehydrogenase (331 aa).

Residues histidine 137 and threonine 138 each contribute to the substrate site. Residues histidine 167, histidine 212, and histidine 267 each contribute to the a divalent metal cation site. Lysine 275, asparagine 284, and arginine 293 together coordinate substrate.

The protein belongs to the PdxA family. In terms of assembly, homodimer. The cofactor is Zn(2+). It depends on Mg(2+) as a cofactor. Requires Co(2+) as cofactor.

It localises to the cytoplasm. It catalyses the reaction 4-(phosphooxy)-L-threonine + NAD(+) = 3-amino-2-oxopropyl phosphate + CO2 + NADH. Its pathway is cofactor biosynthesis; pyridoxine 5'-phosphate biosynthesis; pyridoxine 5'-phosphate from D-erythrose 4-phosphate: step 4/5. Functionally, catalyzes the NAD(P)-dependent oxidation of 4-(phosphooxy)-L-threonine (HTP) into 2-amino-3-oxo-4-(phosphooxy)butyric acid which spontaneously decarboxylates to form 3-amino-2-oxopropyl phosphate (AHAP). The sequence is that of 4-hydroxythreonine-4-phosphate dehydrogenase from Yersinia pseudotuberculosis serotype I (strain IP32953).